Here is a 370-residue protein sequence, read N- to C-terminus: Mitogen-activated protein kinase mpkC (370 aa).

A Protein kinase domain is found at 19–298 (YANVRPVGLG…AAESLEHPYL (280 aa)). ATP-binding positions include 25-33 (VGLGAFGLV) and lysine 48. Aspartate 140 acts as the Proton acceptor in catalysis. Threonine 170 is subject to Phosphothreonine. The TXY motif lies at 170–172 (TGY). Tyrosine 172 carries the phosphotyrosine modification.

This sequence belongs to the protein kinase superfamily. Ser/Thr protein kinase family. MAP kinase subfamily. HOG1 sub-subfamily. Requires Mg(2+) as cofactor. Dually phosphorylated on Thr-170 and Tyr-172, which activates the enzyme.

It catalyses the reaction L-seryl-[protein] + ATP = O-phospho-L-seryl-[protein] + ADP + H(+). It carries out the reaction L-threonyl-[protein] + ATP = O-phospho-L-threonyl-[protein] + ADP + H(+). With respect to regulation, activated by tyrosine and threonine phosphorylation. Mitogen-activated protein kinase required for growth on media where sorbitol or mannitol is the sole carbon source. The protein is Mitogen-activated protein kinase mpkC (mpkC) of Aspergillus terreus (strain NIH 2624 / FGSC A1156).